The following is a 549-amino-acid chain: MSVLTSLPEWKNLSDIAASVKSAHMRDWFAQDTSRADKMQLEACGIFLDYSKNRVNEDALKGLFDLARACKLETLRDAMFSGEQINSTEGRAVLHTALRNFSDRKVLVDGEDVMPEVHATLEKIEAFTASIHSGEHKGYTGKPIKHIVAIGIGGSFLGPKIMTEALKPHTVDAVKVHFVANVDGCHIHDVLSSIDFEETLVVMSSKSFSTQETLQNTLTAKDWFLKSGGTQEDIAKHFVAVSSNVKAATDFGISADNIFPMWDWVGGRYSLWSAIGLPISLALGFENFKGLLEGAFEMDNHFTTAPLEENMPVLLGLLGIWYRNFFDAQSHVLLPYYHYLRGLPAYVQQLDMESNGKEVTQEGESVDYPTGPIIWGSEGTNGQHSFHQLIHQGSGVIPADFMLPLNVPNQDDTHHAMLASNCFGQTQALMQGKSFEECYADLDGKGLDDAERKRLAAHKTMPGNKPSNTFLFDSLTPQTLGALVAMYEHKVFVQGVIWNLNSFDQWGVELGKVLGNQVLAGIQGEADKDNFDASTQQLIAKFRAANAPK.

Glu-353 functions as the Proton donor in the catalytic mechanism. Catalysis depends on residues His-384 and Lys-512.

The protein belongs to the GPI family.

The protein resides in the cytoplasm. The enzyme catalyses alpha-D-glucose 6-phosphate = beta-D-fructose 6-phosphate. It functions in the pathway carbohydrate biosynthesis; gluconeogenesis. It participates in carbohydrate degradation; glycolysis; D-glyceraldehyde 3-phosphate and glycerone phosphate from D-glucose: step 2/4. In terms of biological role, catalyzes the reversible isomerization of glucose-6-phosphate to fructose-6-phosphate. This Alteromonas mediterranea (strain DSM 17117 / CIP 110805 / LMG 28347 / Deep ecotype) protein is Glucose-6-phosphate isomerase.